Consider the following 425-residue polypeptide: uncharacterized protein (425 aa).

Residues 55–181 (RYSHSLGVYE…DLDADRMDYL (127 aa)) form the HD domain.

This is an uncharacterized protein from Mycoplasma pneumoniae (strain ATCC 29342 / M129 / Subtype 1) (Mycoplasmoides pneumoniae).